The chain runs to 293 residues: Ribosomal protein L11 methyltransferase (293 aa).

Residues Thr145, Gly166, Asp188, and Asn230 each coordinate S-adenosyl-L-methionine.

It belongs to the methyltransferase superfamily. PrmA family.

The protein localises to the cytoplasm. The catalysed reaction is L-lysyl-[protein] + 3 S-adenosyl-L-methionine = N(6),N(6),N(6)-trimethyl-L-lysyl-[protein] + 3 S-adenosyl-L-homocysteine + 3 H(+). Methylates ribosomal protein L11. The protein is Ribosomal protein L11 methyltransferase of Escherichia coli (strain 55989 / EAEC).